The primary structure comprises 98 residues: DNA-directed RNA polymerase subunit Rpo11 (98 aa).

It belongs to the archaeal Rpo11/eukaryotic RPB11/RPC19 RNA polymerase subunit family. In terms of assembly, part of the RNA polymerase complex.

It localises to the cytoplasm. It carries out the reaction RNA(n) + a ribonucleoside 5'-triphosphate = RNA(n+1) + diphosphate. Its function is as follows. DNA-dependent RNA polymerase (RNAP) catalyzes the transcription of DNA into RNA using the four ribonucleoside triphosphates as substrates. The sequence is that of DNA-directed RNA polymerase subunit Rpo11 from Korarchaeum cryptofilum (strain OPF8).